The primary structure comprises 520 residues: Ribonuclease Y (520 aa).

The chain crosses the membrane as a helical span at residues 3 to 23 (IEIQWIGIGAAFLVGAIGGAL). The KH domain maps to 210-273 (AVSVVPLPND…EVARLALERL (64 aa)). One can recognise an HD domain in the interval 336 to 429 (VLQHSIEVAF…VQAADALSGA (94 aa)).

This sequence belongs to the RNase Y family.

The protein resides in the cell membrane. In terms of biological role, endoribonuclease that initiates mRNA decay. This is Ribonuclease Y from Syntrophotalea carbinolica (strain DSM 2380 / NBRC 103641 / GraBd1) (Pelobacter carbinolicus).